A 228-amino-acid polypeptide reads, in one-letter code: Prolactin (228 aa).

Positions 1 to 29 (MGTKRSSLKGSLLLLLLMSSLFLFKSVES) are cleaved as a signal peptide. C33 and C40 are joined by a disulfide. Phosphoserine occurs at positions 55, 63, and 119. Disulfide bonds link C87-C203 and C220-C228.

This sequence belongs to the somatotropin/prolactin family. As to quaternary structure, interacts with PRLR.

It is found in the secreted. Functionally, prolactin acts primarily on the mammary gland by promoting lactation, mammogenesis, mitogenesis and osmoregulation. The polypeptide is Prolactin (PRL) (Trichosurus vulpecula (Brush-tailed possum)).